We begin with the raw amino-acid sequence, 349 residues long: MAVAVPPGRAAGSGWAWRPVARDALLARAFHSCTELRGRFYLVGGLLAGGAREPSSDTVVFDPARGQAVRLGARGSPPRSHHDAAPVDGRWLCVVGGWDGSRRLATVTALDTERGVWEAWTGTPGDCPPAGLSSHTCTRISDRELQVAGREGGIHTQRRYGSIYTLRLDPSARTYCYKQEGCHTASRSGHCAALLQTPGPHPGHQLLLFGGCNLAEPEVAGHWSHGKIKEEPPVAPHLMEQLARLVSSGQGSQKGPHGLRHHSCSVVGPFAVLFGGETLTRARDTICNDLYIYDTRTSPPLWFHFPCADRGMKRMGHRTCLWNDQLYLVGGFGEDGRTASPQVCILDFI.

Kelch repeat units follow at residues Arg39–Gly89, Trp91–Cys137, and Gln325–Ile349.

Interacts with CCNA1.

This is Kelch domain-containing protein 9 (KLHDC9) from Homo sapiens (Human).